A 120-amino-acid chain; its full sequence is Cu-Zn superoxide dismutase-like protein OPG175 (120 aa).

Cysteines 52 and 102 form a disulfide.

This sequence belongs to the Cu-Zn superoxide dismutase family.

The protein resides in the virion. The protein localises to the host cytoplasm. In terms of biological role, superoxide dismutase-like protein with no enzymatic activity. This chain is Cu-Zn superoxide dismutase-like protein OPG175 (OPG175), found in Vaccinia virus (strain Tashkent) (VACV).